Reading from the N-terminus, the 267-residue chain is UDP-glucose:undecaprenyl-phosphate glucose-1-phosphate transferase (267 aa).

Residues 83 to 103 (VAAALLTALFAPLLLLAALAI) form a helical membrane-spanning segment.

Belongs to the bacterial sugar transferase family.

The protein localises to the cell membrane. The enzyme catalyses di-trans,octa-cis-undecaprenyl phosphate + UDP-alpha-D-glucose = alpha-D-glucosyl di-trans,octa-cis-undecaprenyl diphosphate + UMP. Its function is as follows. Is likely the initiating enzyme for holdfast polysaccharide synthesis. Catalyzes the transfer of the glucose-1-phosphate moiety from UDP-Glc onto the carrier lipid undecaprenyl phosphate (C55-P), forming a phosphoanhydride bond yielding to glucosyl-pyrophosphoryl-undecaprenol (Glc-PP-C55). Also possesses a weak galactose-1-P transferase activity. This is UDP-glucose:undecaprenyl-phosphate glucose-1-phosphate transferase (pssY) from Caulobacter vibrioides (strain ATCC 19089 / CIP 103742 / CB 15) (Caulobacter crescentus).